We begin with the raw amino-acid sequence, 323 residues long: Thiamine-monophosphate kinase (323 aa).

The Mg(2+) site is built by Asp30, Ser45, Thr46, and Asp47. His54 contacts substrate. 2 residues coordinate Mg(2+): Asp75 and Asp122. Residues Gly121 to Asp122 and Arg146 contribute to the ATP site. Mg(2+) is bound at residue Asp212. Ser214 is a binding site for ATP. Asp215 is a binding site for Mg(2+). Substrate-binding residues include Glu263 and Phe319.

It belongs to the thiamine-monophosphate kinase family.

The enzyme catalyses thiamine phosphate + ATP = thiamine diphosphate + ADP. It participates in cofactor biosynthesis; thiamine diphosphate biosynthesis; thiamine diphosphate from thiamine phosphate: step 1/1. Catalyzes the ATP-dependent phosphorylation of thiamine-monophosphate (TMP) to form thiamine-pyrophosphate (TPP), the active form of vitamin B1. This chain is Thiamine-monophosphate kinase, found in Buchnera aphidicola subsp. Schizaphis graminum (strain Sg).